A 205-amino-acid polypeptide reads, in one-letter code: Molybdenum cofactor guanylyltransferase (205 aa).

GTP contacts are provided by residues 14-16 (LAG), Lys27, Asp77, and Asp107. Asp107 is a binding site for Mg(2+).

This sequence belongs to the MobA family. In terms of assembly, monomer. It depends on Mg(2+) as a cofactor.

The protein localises to the cytoplasm. It catalyses the reaction Mo-molybdopterin + GTP + H(+) = Mo-molybdopterin guanine dinucleotide + diphosphate. In terms of biological role, transfers a GMP moiety from GTP to Mo-molybdopterin (Mo-MPT) cofactor (Moco or molybdenum cofactor) to form Mo-molybdopterin guanine dinucleotide (Mo-MGD) cofactor. The sequence is that of Molybdenum cofactor guanylyltransferase from Burkholderia orbicola (strain MC0-3).